The sequence spans 151 residues: Endoribonuclease YbeY (151 aa).

Zn(2+)-binding residues include His-113, His-117, and His-123.

This sequence belongs to the endoribonuclease YbeY family. The cofactor is Zn(2+).

It localises to the cytoplasm. Single strand-specific metallo-endoribonuclease involved in late-stage 70S ribosome quality control and in maturation of the 3' terminus of the 16S rRNA. The sequence is that of Endoribonuclease YbeY from Polaromonas naphthalenivorans (strain CJ2).